The sequence spans 39 residues: Metallocarboxypeptidase inhibitor (39 aa).

Position 1 is a pyrrolidone carboxylic acid (glutamine 1). 3 disulfide bridges follow: cysteine 8–cysteine 24, cysteine 12–cysteine 27, and cysteine 18–cysteine 34.

Highly concentrated in tubers. Closely related but distinct forms of MCPI are present in leaves, stems and buds.

In terms of biological role, may play a defensive role against insect attacks. Inhibits A.aegypti carboxypeptidase CPB1. In Solanum tuberosum (Potato), this protein is Metallocarboxypeptidase inhibitor.